We begin with the raw amino-acid sequence, 1323 residues long: MLDVNFFDELRIGLATADDIRRWSRGEVKKPETINYRTLKPEKDGLFCERIFGPTRDWECGCGKYKRVRYKGIICERCGVEVTKSKVRRERMGHIELAAPVTHIWYFKGVPSRLGYLLDLAPKDLEKIIYFAANIITSVDEEGRHNDQSTLEAEMLLEKKEVEQERDAELADRAKTLEDDLAELEAAGAKNDAKKKVQNAADREMRHIRERAEREIDRLDEIWNTFVKLAPKQMIVDENIYNELVDRYEDYFTGGMGAEAIQTLIRSFDLEAEAESLREVIRDGKGQKKLRALKRLKVVAAFLRSGNDPAGMVLDCIPVIPPELRPMVQLDGGRFATSDLNDLYRRVINRNNRLKRMLDLGAPEIIVNNEKRMLQESVDALFDNGRRGRPVTGPGNRPLKSLSDLLKGKQGRFRQNLLGKRVDYSGRSVIIVGPQLKLHQCGLPKLMALELFKPFVMKRLVEKSYAQNIKSAKRMVERQRPEVWDVLEEAIAEHPVMLNRAPTLHRLGIQAFEPILVEGKAIQLHPLACEAFNADFDGDQMAVHLPLSAEAQAEARILMLASNNILSPASGKPLAMPRLDMVTGLYYLTLLKKPEEFGGQGAYAPATEDGPAQGVYSSLAEAIMAYDRGVLGLQAPIHVRISHLRPTAEIEAELFPDGWQRGQTWLAETTLGRVLFNELLPWNYPYVEGVMAKKPQASVINDLAAKYPMITVAQTVDKLKDAGFYWATRSGVTITMHDVLVLPNKQEVLDNYEAKARVIEKKMARGKINEAERYQSLVDLWKEATDYVGQSVEDLYPDDNPIPMIVKSGAAGNMRQIWTLAGMKGMVTNSRGEYITRPIKTSFREGLSVLEYFNNSHGSRKGLADTALRTADSGYLTRRLVDVAQDVIVREDDCGTKQGAVVPVAVPVLDAEGKPTGNYTAADFVETSVLGRYLASDATASDGTVIVAEGDVVGEGELQALLEAGVEEVKVRSVMTCATNTGVCSTCYGRSMATGKKVEIGEAVGIVAAQSIGEPGTQLTMRTFHLGGVGGDITGGLPRVQELFEARVPKAKSPIASVDGKVRIEDDDNFFTLTIEPDDGSDDVVYEKLSKRQGLATLGTGGVERPIRDGDHVKMGQQLLKGAADPHEVLRVMGRRGVQQHLINEVQKVYRDQGVAIHDKHIEIIVRQMLRRVTVIDSGSTEFLPGSLVDHADAVAASKEAVKTGGRPVEVRAEIMGITKASLATESWLSAASFQETTRVLTDAAINKRSDKLIGLKENVIIGKLIPAGTGISRYRNISVEPTEEARAAAYSLPSSFGDGFYADDTYGEFTGAAVPLDDIDLM.

4 residues coordinate Zn(2+): Cys-60, Cys-62, Cys-75, and Cys-78. Residues Asp-535, Asp-537, and Asp-539 each contribute to the Mg(2+) site. Zn(2+) contacts are provided by Cys-894, Cys-977, Cys-984, and Cys-987.

This sequence belongs to the RNA polymerase beta' chain family. As to quaternary structure, the RNAP catalytic core consists of 2 alpha, 1 beta, 1 beta' and 1 omega subunit. When a sigma factor is associated with the core the holoenzyme is formed, which can initiate transcription. The cofactor is Mg(2+). Zn(2+) is required as a cofactor.

The enzyme catalyses RNA(n) + a ribonucleoside 5'-triphosphate = RNA(n+1) + diphosphate. Functionally, DNA-dependent RNA polymerase catalyzes the transcription of DNA into RNA using the four ribonucleoside triphosphates as substrates. The sequence is that of DNA-directed RNA polymerase subunit beta' from Corynebacterium jeikeium (strain K411).